Reading from the N-terminus, the 838-residue chain is Translation initiation factor IF-2 (838 aa).

The segment at Met-1–Gln-235 is disordered. A compositionally biased stretch (polar residues) spans Ser-18–His-27. Positions Ser-50–Ser-60 are enriched in low complexity. Positions Lys-88–Arg-156 are enriched in basic and acidic residues. Positions Pro-162–Pro-177 are enriched in low complexity. Basic and acidic residues predominate over residues Ser-187 to Arg-208. The tr-type G domain maps to Pro-335–Lys-509. Residues Gly-344–Thr-351 are G1. Gly-344–Thr-351 is a binding site for GTP. The tract at residues Gly-369–His-373 is G2. The segment at Asp-391 to Gly-394 is G3. Residues Asp-391–His-395 and Asn-445–Asp-448 each bind GTP. A G4 region spans residues Asn-445–Asp-448. The interval Ser-481–Lys-483 is G5.

This sequence belongs to the TRAFAC class translation factor GTPase superfamily. Classic translation factor GTPase family. IF-2 subfamily.

It localises to the cytoplasm. One of the essential components for the initiation of protein synthesis. Protects formylmethionyl-tRNA from spontaneous hydrolysis and promotes its binding to the 30S ribosomal subunits. Also involved in the hydrolysis of GTP during the formation of the 70S ribosomal complex. The polypeptide is Translation initiation factor IF-2 (Cereibacter sphaeroides (strain ATCC 17025 / ATH 2.4.3) (Rhodobacter sphaeroides)).